The chain runs to 209 residues: Octanoyltransferase (209 aa).

The 180-residue stretch at 30 to 209 folds into the BPL/LPL catalytic domain; the sequence is DHEPEIIYLV…IQTEFNKIFK (180 aa). Substrate-binding positions include 69 to 76, 143 to 145, and 156 to 158; these read RGGKFTFH, AIG, and GVA. Cys-174 serves as the catalytic Acyl-thioester intermediate.

This sequence belongs to the LipB family.

It is found in the cytoplasm. The enzyme catalyses octanoyl-[ACP] + L-lysyl-[protein] = N(6)-octanoyl-L-lysyl-[protein] + holo-[ACP] + H(+). The protein operates within protein modification; protein lipoylation via endogenous pathway; protein N(6)-(lipoyl)lysine from octanoyl-[acyl-carrier-protein]: step 1/2. In terms of biological role, catalyzes the transfer of endogenously produced octanoic acid from octanoyl-acyl-carrier-protein onto the lipoyl domains of lipoate-dependent enzymes. Lipoyl-ACP can also act as a substrate although octanoyl-ACP is likely to be the physiological substrate. In Rickettsia rickettsii (strain Iowa), this protein is Octanoyltransferase.